The following is a 173-amino-acid chain: Crossover junction endodeoxyribonuclease RuvC (173 aa).

Active-site residues include Asp8, Glu67, and Asp139. Mg(2+)-binding residues include Asp8, Glu67, and Asp139.

This sequence belongs to the RuvC family. In terms of assembly, homodimer which binds Holliday junction (HJ) DNA. The HJ becomes 2-fold symmetrical on binding to RuvC with unstacked arms; it has a different conformation from HJ DNA in complex with RuvA. In the full resolvosome a probable DNA-RuvA(4)-RuvB(12)-RuvC(2) complex forms which resolves the HJ. Mg(2+) is required as a cofactor.

It localises to the cytoplasm. It catalyses the reaction Endonucleolytic cleavage at a junction such as a reciprocal single-stranded crossover between two homologous DNA duplexes (Holliday junction).. Its function is as follows. The RuvA-RuvB-RuvC complex processes Holliday junction (HJ) DNA during genetic recombination and DNA repair. Endonuclease that resolves HJ intermediates. Cleaves cruciform DNA by making single-stranded nicks across the HJ at symmetrical positions within the homologous arms, yielding a 5'-phosphate and a 3'-hydroxyl group; requires a central core of homology in the junction. The consensus cleavage sequence is 5'-(A/T)TT(C/G)-3'. Cleavage occurs on the 3'-side of the TT dinucleotide at the point of strand exchange. HJ branch migration catalyzed by RuvA-RuvB allows RuvC to scan DNA until it finds its consensus sequence, where it cleaves and resolves the cruciform DNA. The polypeptide is Crossover junction endodeoxyribonuclease RuvC (Sodalis glossinidius (strain morsitans)).